We begin with the raw amino-acid sequence, 470 residues long: Pyruvate kinase I (470 aa).

Arg32 is a substrate binding site. Asn34, Ser36, Asp66, and Thr67 together coordinate K(+). Asn34–His37 is an ATP binding site. The ATP site is built by Arg73 and Lys156. Position 222 (Glu222) interacts with Mg(2+). Gly245, Asp246, and Thr278 together coordinate substrate. Asp246 is a Mg(2+) binding site.

The protein belongs to the pyruvate kinase family. Homotetramer. Mg(2+) is required as a cofactor. Requires K(+) as cofactor.

The catalysed reaction is pyruvate + ATP = phosphoenolpyruvate + ADP + H(+). The protein operates within carbohydrate degradation; glycolysis; pyruvate from D-glyceraldehyde 3-phosphate: step 5/5. The polypeptide is Pyruvate kinase I (pykF) (Salmonella typhi).